The chain runs to 436 residues: 3-ketoacyl-CoA thiolase (436 aa).

The active-site Acyl-thioester intermediate is the Cys99. Residues His392 and Cys422 each act as proton acceptor in the active site.

The protein belongs to the thiolase-like superfamily. Thiolase family. Heterotetramer of two alpha chains (FadJ) and two beta chains (FadI).

It is found in the cytoplasm. It catalyses the reaction an acyl-CoA + acetyl-CoA = a 3-oxoacyl-CoA + CoA. It functions in the pathway lipid metabolism; fatty acid beta-oxidation. In terms of biological role, catalyzes the final step of fatty acid oxidation in which acetyl-CoA is released and the CoA ester of a fatty acid two carbons shorter is formed. This Shigella flexneri serotype 5b (strain 8401) protein is 3-ketoacyl-CoA thiolase.